The chain runs to 247 residues: MSKEPDRLFAQPLAQVPDFAFNEDVVRVFPDMIKRSVPGYPTIVENLGVLAAQFAQPNSVLYDLGSSLGAVTQALRRHVRTDGCRVIAVDNSAAMVERCREYLNGQDSMFQELLPVQVIEGDILALEFQPASVVALNFTLQFIAPEQRLALLGRIRQSLLPGGALILSEKLRFNDDQEHALLTDLHIAFKRANGYSELEIAQKRSAIENVMKPDSLEEHRERLLAAGFSKVVPWFQCLNFASLIALP.

S-adenosyl-L-methionine contacts are provided by residues Tyr40, 65–67 (GSS), 90–91 (DN), 122–123 (DI), Asn137, and Arg204.

Belongs to the class I-like SAM-binding methyltransferase superfamily. Cx-SAM synthase family. Homodimer.

It catalyses the reaction prephenate + S-adenosyl-L-methionine = carboxy-S-adenosyl-L-methionine + 3-phenylpyruvate + H2O. Its function is as follows. Catalyzes the conversion of S-adenosyl-L-methionine (SAM) to carboxy-S-adenosyl-L-methionine (Cx-SAM). This chain is Carboxy-S-adenosyl-L-methionine synthase, found in Pseudomonas fluorescens (strain ATCC BAA-477 / NRRL B-23932 / Pf-5).